The chain runs to 74 residues: U4-theraphotoxin-Cg1a (74 aa).

Positions 1–19 (MNATIFALLLLLNLAMHNA) are cleaved as a signal peptide. Positions 20 to 39 (AEQSSETDMDDTLLIPEINR) are excised as a propeptide. Cystine bridges form between Cys42–Cys56, Cys49–Cys61, and Cys55–Cys71.

This sequence belongs to the neurotoxin 36 family. 01 subfamily. Expressed by the venom gland.

It is found in the secreted. Its function is as follows. Probable ion channel inhibitor. The chain is U4-theraphotoxin-Cg1a from Chilobrachys guangxiensis (Chinese earth tiger tarantula).